A 482-amino-acid chain; its full sequence is Rho GTPase-activating protein 15 (482 aa).

A phosphoserine mark is found at serine 51, serine 111, serine 205, serine 208, and serine 250. Residues 87-198 form the PH domain; that stretch reads MVEKEGYLQK…WFHAIKNAID (112 aa). Positions 288–477 constitute a Rho-GAP domain; it reads SHLHTVCERE…FMLTEYDKIF (190 aa).

Its subcellular location is the cytoplasm. The protein resides in the membrane. GTPase activator for the Rho-type GTPases by converting them to an inactive GDP-bound state. Has activity toward RAC1. Overexpression results in an increase in actin stress fibers and cell contraction. This is Rho GTPase-activating protein 15 (Arhgap15) from Rattus norvegicus (Rat).